Consider the following 142-residue polypeptide: Transcriptional regulator MraZ (142 aa).

SpoVT-AbrB domains follow at residues 5-47 (RFTH…PMDS) and 76-119 (ATVV…SPEN).

This sequence belongs to the MraZ family. Forms oligomers.

It localises to the cytoplasm. Its subcellular location is the nucleoid. This chain is Transcriptional regulator MraZ, found in Thermomicrobium roseum (strain ATCC 27502 / DSM 5159 / P-2).